We begin with the raw amino-acid sequence, 1170 residues long: Error-prone DNA polymerase (1170 aa).

Disordered regions lie at residues Arg-867–Asp-899 and Ile-1129–His-1170. The segment covering Pro-886–Asp-899 has biased composition (basic and acidic residues).

It belongs to the DNA polymerase type-C family. DnaE2 subfamily.

Its subcellular location is the cytoplasm. It carries out the reaction DNA(n) + a 2'-deoxyribonucleoside 5'-triphosphate = DNA(n+1) + diphosphate. Its function is as follows. DNA polymerase involved in damage-induced mutagenesis and translesion synthesis (TLS). It is not the major replicative DNA polymerase. This Bradyrhizobium sp. (strain ORS 278) protein is Error-prone DNA polymerase.